The sequence spans 156 residues: Cyanate hydratase (156 aa).

Active-site residues include Arg96, Glu99, and Ser122.

It belongs to the cyanase family.

It catalyses the reaction cyanate + hydrogencarbonate + 3 H(+) = NH4(+) + 2 CO2. In terms of biological role, catalyzes the reaction of cyanate with bicarbonate to produce ammonia and carbon dioxide. The polypeptide is Cyanate hydratase (Pseudomonas paraeruginosa (strain DSM 24068 / PA7) (Pseudomonas aeruginosa (strain PA7))).